A 330-amino-acid chain; its full sequence is Ketol-acid reductoisomerase (NADP(+)) (330 aa).

A KARI N-terminal Rossmann domain is found at Met1–Thr181. NADP(+) contacts are provided by residues Tyr24–Gln27, Arg47, Ser52, and Asp82–Gln85. The active site involves His107. Gly133 contacts NADP(+). One can recognise a KARI C-terminal knotted domain in the interval Thr182–Glu327. The Mg(2+) site is built by Asp190, Glu194, Glu226, and Glu230. Ser251 provides a ligand contact to substrate.

It belongs to the ketol-acid reductoisomerase family. The cofactor is Mg(2+).

The catalysed reaction is (2R)-2,3-dihydroxy-3-methylbutanoate + NADP(+) = (2S)-2-acetolactate + NADPH + H(+). It carries out the reaction (2R,3R)-2,3-dihydroxy-3-methylpentanoate + NADP(+) = (S)-2-ethyl-2-hydroxy-3-oxobutanoate + NADPH + H(+). It functions in the pathway amino-acid biosynthesis; L-isoleucine biosynthesis; L-isoleucine from 2-oxobutanoate: step 2/4. The protein operates within amino-acid biosynthesis; L-valine biosynthesis; L-valine from pyruvate: step 2/4. In terms of biological role, involved in the biosynthesis of branched-chain amino acids (BCAA). Catalyzes an alkyl-migration followed by a ketol-acid reduction of (S)-2-acetolactate (S2AL) to yield (R)-2,3-dihydroxy-isovalerate. In the isomerase reaction, S2AL is rearranged via a Mg-dependent methyl migration to produce 3-hydroxy-3-methyl-2-ketobutyrate (HMKB). In the reductase reaction, this 2-ketoacid undergoes a metal-dependent reduction by NADPH to yield (R)-2,3-dihydroxy-isovalerate. The polypeptide is Ketol-acid reductoisomerase (NADP(+)) (Methanococcus maripaludis (strain C5 / ATCC BAA-1333)).